The sequence spans 198 residues: Type 1 fimbriae regulatory protein FimE (198 aa).

Positions 2–184 constitute a Tyr recombinase domain; that stretch reads SKRRYLTGKE…NAARFAGLWE (183 aa). Active-site residues include Arg-41, Lys-66, His-136, Arg-139, and His-162. Tyr-171 serves as the catalytic O-(3'-phospho-DNA)-tyrosine intermediate.

This sequence belongs to the 'phage' integrase family.

Its function is as follows. FimE is one of the 2 regulatory proteins which control the phase variation of type 1 fimbriae in E.coli. These proteins mediate the periodic inversion of a 300bp DNA segment that harbors the promoter for the fimbrial structural gene, fimA. FimE switches fimA off. The protein is Type 1 fimbriae regulatory protein FimE (fimE) of Escherichia coli O6:H1 (strain CFT073 / ATCC 700928 / UPEC).